Here is a 249-residue protein sequence, read N- to C-terminus: MELNPLKKSPSSEAVRNLREASCGPVGTPTVTNDLSENIILTSLEDLHNWARLSSLWPLLYGTACCFIEFAALIGSRFDFDRFGLVPRSSPRQADLLIVAGTVTMKMAPALVRLYEQMPDPKYVIAMGACTITGGMFSADSTTAVRGVDKLIPVDLYLPGCPPRPEAIFDAVIKLRKKVANESISERSKITQTHRYLTIPHKMKRVESKVNGQYLKAKTQLIALNPSLSEEFDQSLKEVQKISEELSSN.

Cys65, Cys66, Cys130, and Cys161 together coordinate [4Fe-4S] cluster.

The protein belongs to the complex I 20 kDa subunit family. In terms of assembly, NDH-1 can be composed of about 15 different subunits; different subcomplexes with different compositions have been identified which probably have different functions. [4Fe-4S] cluster is required as a cofactor.

The protein localises to the cellular thylakoid membrane. The enzyme catalyses a plastoquinone + NADH + (n+1) H(+)(in) = a plastoquinol + NAD(+) + n H(+)(out). It catalyses the reaction a plastoquinone + NADPH + (n+1) H(+)(in) = a plastoquinol + NADP(+) + n H(+)(out). In terms of biological role, NDH-1 shuttles electrons from an unknown electron donor, via FMN and iron-sulfur (Fe-S) centers, to quinones in the respiratory and/or the photosynthetic chain. The immediate electron acceptor for the enzyme in this species is believed to be plastoquinone. Couples the redox reaction to proton translocation, and thus conserves the redox energy in a proton gradient. Cyanobacterial NDH-1 also plays a role in inorganic carbon-concentration. This chain is NAD(P)H-quinone oxidoreductase subunit K, found in Prochlorococcus marinus (strain NATL2A).